The primary structure comprises 427 residues: Glutamyl-tRNA(Gln) amidotransferase subunit D (427 aa).

Positions 1 to 18 (MTADPGDRVRVTHGDASH) are enriched in basic and acidic residues. Residues 1-20 (MTADPGDRVRVTHGDASHEG) form a disordered region. Residues 80–413 (PTIALISTGG…DDPEAAMQES (334 aa)) enclose the Asparaginase/glutaminase domain. Residues Thr90, Thr166, Asp167, and Lys243 contribute to the active site.

This sequence belongs to the asparaginase 1 family. GatD subfamily. In terms of assembly, heterodimer of GatD and GatE.

It carries out the reaction L-glutamyl-tRNA(Gln) + L-glutamine + ATP + H2O = L-glutaminyl-tRNA(Gln) + L-glutamate + ADP + phosphate + H(+). Its function is as follows. Allows the formation of correctly charged Gln-tRNA(Gln) through the transamidation of misacylated Glu-tRNA(Gln) in organisms which lack glutaminyl-tRNA synthetase. The reaction takes place in the presence of glutamine and ATP through an activated gamma-phospho-Glu-tRNA(Gln). The GatDE system is specific for glutamate and does not act on aspartate. This is Glutamyl-tRNA(Gln) amidotransferase subunit D from Halobacterium salinarum (strain ATCC 29341 / DSM 671 / R1).